Consider the following 359-residue polypeptide: DNA replication and repair protein RecF (359 aa).

30 to 37 (GPNGSGKT) is a binding site for ATP.

Belongs to the RecF family.

It is found in the cytoplasm. In terms of biological role, the RecF protein is involved in DNA metabolism; it is required for DNA replication and normal SOS inducibility. RecF binds preferentially to single-stranded, linear DNA. It also seems to bind ATP. This is DNA replication and repair protein RecF from Vibrio vulnificus (strain CMCP6).